We begin with the raw amino-acid sequence, 283 residues long: UPF0273 protein STK_18300 (283 aa).

A KaiC domain is found at 4–249; it reads LRVRTYIPGF…YLRITNVKAE (246 aa). ATP is bound at residue 31 to 38; sequence GGPGTGKS. Residues 261-283 form a disordered region; that stretch reads MKKAVEESEEEKESIQEAEIEEE. Over residues 267-283 the composition is skewed to acidic residues; that stretch reads ESEEEKESIQEAEIEEE.

The protein belongs to the UPF0273 family.

The polypeptide is UPF0273 protein STK_18300 (Sulfurisphaera tokodaii (strain DSM 16993 / JCM 10545 / NBRC 100140 / 7) (Sulfolobus tokodaii)).